Consider the following 230-residue polypeptide: TorCAD operon transcriptional regulatory protein TorR (230 aa).

The region spanning 4-117 is the Response regulatory domain; sequence HIVIVEDEPV…ELVVRVKNLL (114 aa). At aspartate 53 the chain carries 4-aspartylphosphate. Residues 132–227 constitute a DNA-binding region (ompR/PhoB-type); sequence DNCYRFAGYC…QHGEGYFLAA (96 aa).

In terms of assembly, interacts with TorI. TorI binds to the effector domain of TorR. This interaction, which does not interfere with TorR DNA binding activity, probably prevents the recruitment of RNA polymerase to the torCAD promoter. In terms of processing, phosphorylated and dephosphorylated by TorS.

The protein resides in the cytoplasm. Functionally, member of the two-component regulatory system TorS/TorR involved in the anaerobic utilization of trimethylamine-N-oxide (TMAO). Phosphorylated TorR activates the transcription of the torCAD operon by binding to four decameric boxes located in the torCAD promoter. Box1, 2 and 4 contain the DNA sequence 5'-CTGTTCATAT-3' and box3 contains the DNA sequence 5'-CCGTTCATCC-3'. Phosphorylated as well as unphosphorylated TorR negatively regulates its own expression by binding to box1 and 2. This is TorCAD operon transcriptional regulatory protein TorR (torR) from Escherichia coli (strain K12).